Reading from the N-terminus, the 149-residue chain is Small heat shock protein IbpB (149 aa).

Residues 26 to 137 (SQEPIDFPPY…QPQRIAIGGG (112 aa)) form the sHSP domain.

Belongs to the small heat shock protein (HSP20) family. In terms of assembly, homodimer. Forms homomultimers of about 100-150 subunits at optimal growth temperatures. Conformation changes to oligomers at high temperatures or high ionic concentrations. The decrease in size of the multimers is accompanied by an increase in chaperone activity.

The protein localises to the cytoplasm. Functionally, associates with aggregated proteins, together with IbpA, to stabilize and protect them from irreversible denaturation and extensive proteolysis during heat shock and oxidative stress. Aggregated proteins bound to the IbpAB complex are more efficiently refolded and reactivated by the ATP-dependent chaperone systems ClpB and DnaK/DnaJ/GrpE. Its activity is ATP-independent. The chain is Small heat shock protein IbpB from Pectobacterium carotovorum subsp. carotovorum (strain PC1).